A 423-amino-acid chain; its full sequence is 58 kDa phosphoprotein (423 aa).

Residues 46 to 60 show a composition bias toward basic and acidic residues; that stretch reads KMGYEKMKSEDSTEE. The interval 46 to 82 is disordered; it reads KMGYEKMKSEDSTEEKSDEEEEDEEEEEEEEEDDDPE. Over residues 61–82 the composition is skewed to acidic residues; the sequence is KSDEEEEDEEEEEEEEEDDDPE. TPR repeat units lie at residues 113–146, 147–180, and 181–214; these read ICKL…GNPS, AMIY…NVDS, and ANAY…DYDE. Positions 260 to 301 are disordered; sequence KKKAEKMYKENNKRENYDSDSSDSSYSEPDFSGDFPGGMPGG. Positions 264 to 276 are enriched in basic and acidic residues; the sequence is EKMYKENNKRENY. Residues 292–362 are 19 X 3-4 AA approximate repeats; the sequence is GDFPGGMPGG…GMPGMPGGMP (71 aa). The STI1 domain occupies 361 to 423; the sequence is MPDLNSPEMK…GGMMGEKPKP (63 aa).

It localises to the cytoplasm. In terms of biological role, may play a role in protein folding or protein-protein interactions. May act as a co-chaperone. In Plasmodium berghei, this protein is 58 kDa phosphoprotein.